The sequence spans 105 residues: Malonate decarboxylase acyl carrier protein (105 aa).

Ser-28 carries the O-(phosphoribosyl dephospho-coenzyme A)serine modification.

The protein belongs to the MdcC family. Post-translationally, covalently binds the prosthetic group of malonate decarboxylase.

The protein resides in the cytoplasm. Its function is as follows. Subunit of malonate decarboxylase, it is an acyl carrier protein to which acetyl and malonyl thioester residues are bound via a 2'-(5''-phosphoribosyl)-3'-dephospho-CoA prosthetic group and turn over during the catalytic mechanism. In Bradyrhizobium diazoefficiens (strain JCM 10833 / BCRC 13528 / IAM 13628 / NBRC 14792 / USDA 110), this protein is Malonate decarboxylase acyl carrier protein.